A 444-amino-acid chain; its full sequence is MQVTETLSEGLKRGFTVQVPATDIEERRTRRLAELAKTLKLPGFRPGKVPMTLVRQRYGRSVETEVLEETVNEATQTMVSERGLRPALQPKVELVRVDLDQDVEFKVELELLPDITLPDLGSVSLTRLKAEPSAEAVDKALEEIAQRQRNLEPVEEVRPAQKGDFLTVDFVGKTDGVAFQGGTGTDMDVEIAGTGFIPGFSEQMEGLSVGETRVIDVTFPEEYGVPELAGKPAQFEITAKALKKAVAPVIDDAFATKLGLDSLEKLREIVTQQIQNEYDQVSRLRVKRALLDALADQAAFEVPPTLVENEFNQIWQRVDADRKADRLDEDDKGKDEDTLRADYRKIAERRVRLGLLLAEIGRVNGVQVGNDELIRAMRAEASRYPGQEQAVLDFFRQNPQAIDSLRGPIFEEKVVDFVLETAKVDDKFVSIEELNADEDVAGIA.

The PPIase FKBP-type domain occupies 163–248 (GDFLTVDFVG…AKALKKAVAP (86 aa)).

Belongs to the FKBP-type PPIase family. Tig subfamily.

The protein localises to the cytoplasm. It catalyses the reaction [protein]-peptidylproline (omega=180) = [protein]-peptidylproline (omega=0). Its function is as follows. Involved in protein export. Acts as a chaperone by maintaining the newly synthesized protein in an open conformation. Functions as a peptidyl-prolyl cis-trans isomerase. In Granulibacter bethesdensis (strain ATCC BAA-1260 / CGDNIH1), this protein is Trigger factor.